A 118-amino-acid chain; its full sequence is Protein MT2260 (118 aa).

It belongs to the HesB/IscA family.

The polypeptide is Protein MT2260 (Mycobacterium tuberculosis (strain CDC 1551 / Oshkosh)).